The chain runs to 213 residues: UPF0329 protein ECU04_0110 (213 aa).

Belongs to the UPF0329 family.

The protein is UPF0329 protein ECU04_0110 of Encephalitozoon cuniculi (strain GB-M1) (Microsporidian parasite).